The sequence spans 208 residues: Glutathione S-transferase 2 (208 aa).

A GST N-terminal domain is found at 1-78; the sequence is MSYKLTYFSI…HLARKYNLNG (78 aa). Glutathione-binding positions include Tyr7, Lys42, 49–50, and 62–63; these read QL and QS. The 121-residue stretch at 80–200 folds into the GST C-terminal domain; sequence NEMETTYIDM…YCEKRDAAKV (121 aa).

It belongs to the GST superfamily. Pi family. As to quaternary structure, homodimer. As to expression, hypodermis, wall of the seminal receptacle and spermatozoa of adult worms.

The catalysed reaction is RX + glutathione = an S-substituted glutathione + a halide anion + H(+). In terms of biological role, appears to play a central role in the parasite detoxification system. In Onchocerca volvulus, this protein is Glutathione S-transferase 2 (GST2).